Consider the following 216-residue polypeptide: Nudix hydrolase 26, chloroplastic (216 aa).

The N-terminal 53 residues, 1–53 (MALYRPLLLHHPTSPSVTTFLRNYPSKPIKFSSLPFLHRCRKSRVSSSSARCC), are a transit peptide targeting the chloroplast. A Nudix hydrolase domain is found at 62–209 (GYRRNVGVCL…KKPVYKEVMS (148 aa)). The Nudix box motif lies at 95–116 (GGIDEGEDPRVAVMRELKEETG). Mn(2+) is bound by residues glutamate 110 and glutamate 114.

The protein belongs to the Nudix hydrolase family. Mg(2+) serves as cofactor. It depends on Mn(2+) as a cofactor. Expressed in roots, leaves, stems and inflorescences.

It localises to the plastid. The protein resides in the chloroplast. Mediates the hydrolysis of some nucleoside diphosphate derivatives. Can use diadenosine 5',5'''-P(1)P(5) pentaphosphate (Ap(5)A), diadenosine 5',5'''-P(1)P(4) tetraphosphate (Ap(4)A) and diadenosine 5',5'''-P(1)P(3) triphosphate (Ap(3)A) as substrates. The polypeptide is Nudix hydrolase 26, chloroplastic (NUDT26) (Arabidopsis thaliana (Mouse-ear cress)).